The primary structure comprises 32 residues: Trypsin inhibitor 4 (32 aa).

Intrachain disulfides connect C6-C23, C13-C25, and C19-C31.

It belongs to the protease inhibitor I7 (squash-type serine protease inhibitor) family.

The protein localises to the secreted. Inhibits trypsin. The sequence is that of Trypsin inhibitor 4 from Cucurbita maxima (Pumpkin).